Here is a 488-residue protein sequence, read N- to C-terminus: Ribulose bisphosphate carboxylase large chain 1 (488 aa).

Asparagine 127 and threonine 177 together coordinate substrate. Lysine 179 functions as the Proton acceptor in the catalytic mechanism. Lysine 181 is a binding site for substrate. Mg(2+) contacts are provided by lysine 205, aspartate 207, and glutamate 208. Residue lysine 205 is modified to N6-carboxylysine. The active-site Proton acceptor is the histidine 297. Substrate-binding residues include arginine 298, histidine 330, and serine 382.

Belongs to the RuBisCO large chain family. Type I subfamily. Heterohexadecamer of 8 large chains and 8 small chains. Mg(2+) serves as cofactor.

It carries out the reaction 2 (2R)-3-phosphoglycerate + 2 H(+) = D-ribulose 1,5-bisphosphate + CO2 + H2O. The catalysed reaction is D-ribulose 1,5-bisphosphate + O2 = 2-phosphoglycolate + (2R)-3-phosphoglycerate + 2 H(+). RuBisCO catalyzes two reactions: the carboxylation of D-ribulose 1,5-bisphosphate, the primary event in carbon dioxide fixation, as well as the oxidative fragmentation of the pentose substrate. Both reactions occur simultaneously and in competition at the same active site. The chain is Ribulose bisphosphate carboxylase large chain 1 from Bradyrhizobium sp. (strain BTAi1 / ATCC BAA-1182).